The following is a 305-amino-acid chain: Phospho-N-acetylmuramoyl-pentapeptide-transferase (305 aa).

Transmembrane regions (helical) follow at residues Met-1–Lys-21, Ala-46–Gly-66, Glu-73–Leu-93, Phe-113–His-133, Leu-139–Phe-159, Ile-174–Leu-194, Val-207–Leu-227, Leu-233–Ile-253, and Val-282–Gly-302.

The protein belongs to the glycosyltransferase 4 family. MraY subfamily. Requires Mg(2+) as cofactor.

Its subcellular location is the cell membrane. It catalyses the reaction UDP-N-acetyl-alpha-D-muramoyl-L-alanyl-gamma-D-glutamyl-meso-2,6-diaminopimeloyl-D-alanyl-D-alanine + di-trans,octa-cis-undecaprenyl phosphate = di-trans,octa-cis-undecaprenyl diphospho-N-acetyl-alpha-D-muramoyl-L-alanyl-D-glutamyl-meso-2,6-diaminopimeloyl-D-alanyl-D-alanine + UMP. It participates in cell wall biogenesis; peptidoglycan biosynthesis. Its function is as follows. Catalyzes the initial step of the lipid cycle reactions in the biosynthesis of the cell wall peptidoglycan: transfers peptidoglycan precursor phospho-MurNAc-pentapeptide from UDP-MurNAc-pentapeptide onto the lipid carrier undecaprenyl phosphate, yielding undecaprenyl-pyrophosphoryl-MurNAc-pentapeptide, known as lipid I. The chain is Phospho-N-acetylmuramoyl-pentapeptide-transferase from Deinococcus deserti (strain DSM 17065 / CIP 109153 / LMG 22923 / VCD115).